The primary structure comprises 56 residues: uncharacterized protein (56 aa).

Residues 21-38 (HTHTPHPHHTHTHTHHTP) show a composition bias toward basic residues. The segment at 21-40 (HTHTPHPHHTHTHTHHTPTH) is disordered.

This is an uncharacterized protein from Saccharomyces cerevisiae (strain ATCC 204508 / S288c) (Baker's yeast).